Consider the following 213-residue polypeptide: Vacuolar ATPase assembly integral membrane protein vph2 (213 aa).

Transmembrane regions (helical) follow at residues 113-133 (ISAI…VWYC) and 142-162 (KIAL…FLYV).

It is found in the endoplasmic reticulum membrane. Functionally, required for vacuolar ATPase assembly. This chain is Vacuolar ATPase assembly integral membrane protein vph2 (vph2), found in Schizosaccharomyces pombe (strain 972 / ATCC 24843) (Fission yeast).